A 212-amino-acid chain; its full sequence is Probable GTP-binding protein EngB (212 aa).

The EngB-type G domain maps to 38–210 (SLPEIAFVGK…KASLAKCIKP (173 aa)). Residues 46–53 (GKSNVGKS), 73–77 (GRTRQ), 91–94 (DLPG), 158–161 (TKSD), and 189–191 (VSN) each bind GTP. Positions 53 and 75 each coordinate Mg(2+).

The protein belongs to the TRAFAC class TrmE-Era-EngA-EngB-Septin-like GTPase superfamily. EngB GTPase family. Requires Mg(2+) as cofactor.

Its function is as follows. Necessary for normal cell division and for the maintenance of normal septation. This chain is Probable GTP-binding protein EngB, found in Rickettsia peacockii (strain Rustic).